We begin with the raw amino-acid sequence, 150 residues long: MRAVVQRVNSANVDVNGKIIGKIKKGLLVLLGVGKNDTESDAEYLVNKILNLRIFDDNKGKMNLSLLDIKGDILIVSQFTLYGDCRRGRRPSYSDSASPEKAKKLYEYFVEKIRKEYNIKVETGEFGAYMKVNLENDGPVTLLLDSKKVF.

The short motif at G138 to P139 is the Gly-cisPro motif, important for rejection of L-amino acids element.

It belongs to the DTD family. In terms of assembly, homodimer.

It localises to the cytoplasm. It carries out the reaction glycyl-tRNA(Ala) + H2O = tRNA(Ala) + glycine + H(+). The catalysed reaction is a D-aminoacyl-tRNA + H2O = a tRNA + a D-alpha-amino acid + H(+). An aminoacyl-tRNA editing enzyme that deacylates mischarged D-aminoacyl-tRNAs. Also deacylates mischarged glycyl-tRNA(Ala), protecting cells against glycine mischarging by AlaRS. Acts via tRNA-based rather than protein-based catalysis; rejects L-amino acids rather than detecting D-amino acids in the active site. By recycling D-aminoacyl-tRNA to D-amino acids and free tRNA molecules, this enzyme counteracts the toxicity associated with the formation of D-aminoacyl-tRNA entities in vivo and helps enforce protein L-homochirality. This is D-aminoacyl-tRNA deacylase from Thermosipho melanesiensis (strain DSM 12029 / CIP 104789 / BI429).